The following is a 448-amino-acid chain: UDP-N-acetylmuramoylalanine--D-glutamate ligase (448 aa).

116–122 (GSNAKST) serves as a coordination point for ATP.

Belongs to the MurCDEF family.

The protein resides in the cytoplasm. It carries out the reaction UDP-N-acetyl-alpha-D-muramoyl-L-alanine + D-glutamate + ATP = UDP-N-acetyl-alpha-D-muramoyl-L-alanyl-D-glutamate + ADP + phosphate + H(+). The protein operates within cell wall biogenesis; peptidoglycan biosynthesis. Cell wall formation. Catalyzes the addition of glutamate to the nucleotide precursor UDP-N-acetylmuramoyl-L-alanine (UMA). The chain is UDP-N-acetylmuramoylalanine--D-glutamate ligase from Pseudomonas savastanoi pv. phaseolicola (strain 1448A / Race 6) (Pseudomonas syringae pv. phaseolicola (strain 1448A / Race 6)).